Here is a 276-residue protein sequence, read N- to C-terminus: MDNAHRQTQAHLDAACFWQIWQRFDKDEKGYIKETELDAFFDDLLAKFGIEDTLMEENVQKMKEQLMVGHDISKEGRILMKELASMFLSEDENFLLFFRLETPLDNSVEFMQIWRKYDADSSGFISAAELSNFLRDLFLHHKKVISEAELEEYTSTMEKIFDRNKDGRLDLNDLARILALQENFLLQFKMDASSTEERKRDFEKIFAHYDVSKTGALEGPEVDGFVKDMMELVQPSISGVDLDKFREILLRHCDVNKDGKIQKSELALCLGLKINP.

EF-hand domains follow at residues Leu12–Lys47, Asp105–His140, Glu149–Phe184, Glu197–Leu232, and Val240–Pro276. Residues Asp118, Asp120, Ser122, Glu129, Asp162, Asn164, Asp166, Arg168, Asp173, Asp210, Ser212, Thr214, Glu221, Asp254, Asn256, Asp258, Lys260, and Glu265 each contribute to the Ca(2+) site.

In terms of tissue distribution, highly expressed in pancreas, in particular in pancreatic islets and pancreatic beta-cells. Detected in prostate, adrenal gland, small intestine, stomach and thyroid (at protein level).

It is found in the cytoplasm. Its subcellular location is the secreted. The protein localises to the cytoplasmic vesicle. It localises to the secretory vesicle membrane. The protein is Secretagogin (Scgn) of Rattus norvegicus (Rat).